Reading from the N-terminus, the 323-residue chain is GILT-like protein C02D5.2 (323 aa).

A helical transmembrane segment spans residues 13–32 (LICRPILTFSSLHILTAFLI). Asn-35 carries N-linked (GlcNAc...) asparagine glycosylation. 2 helical membrane passes run 37–59 (SYIN…HRFL) and 87–104 (YIYG…YRSL). Asn-289 carries N-linked (GlcNAc...) asparagine glycosylation.

It belongs to the GILT family.

It is found in the membrane. The polypeptide is GILT-like protein C02D5.2 (Caenorhabditis elegans).